The chain runs to 259 residues: Peroxisomal membrane protein 11B (259 aa).

The residue at position 43 (K43) is an N6-acetyllysine. An interaction with PEX19, PEX11G and FIS1 and peroxisome targeting region spans residues 211-259; it reads VVRNACDLFIPLDKLGLWRCGPGIVGLCGLVSSILSILTLIYPWLRLKP. The helical transmembrane segment at 234–254 threads the bilayer; the sequence is IVGLCGLVSSILSILTLIYPW.

This sequence belongs to the peroxin-11 family. Homodimer. Heterodimer with PEX11G. Interacts with PEX19. Interacts with FIS1.

The protein resides in the peroxisome membrane. Functionally, involved in peroxisomal proliferation. May regulate peroxisome division by recruiting the dynamin-related GTPase DNM1L to the peroxisomal membrane. Promotes membrane protrusion and elongation on the peroxisomal surface. The protein is Peroxisomal membrane protein 11B (PEX11B) of Pongo abelii (Sumatran orangutan).